Here is a 169-residue protein sequence, read N- to C-terminus: Peptide deformylase (169 aa).

Residues cysteine 94 and histidine 136 each coordinate Fe cation. The active site involves glutamate 137. Residue histidine 140 participates in Fe cation binding.

The protein belongs to the polypeptide deformylase family. The cofactor is Fe(2+).

It carries out the reaction N-terminal N-formyl-L-methionyl-[peptide] + H2O = N-terminal L-methionyl-[peptide] + formate. In terms of biological role, removes the formyl group from the N-terminal Met of newly synthesized proteins. Requires at least a dipeptide for an efficient rate of reaction. N-terminal L-methionine is a prerequisite for activity but the enzyme has broad specificity at other positions. This is Peptide deformylase from Phenylobacterium zucineum (strain HLK1).